The following is a 342-amino-acid chain: Ferredoxin--NADP reductase (342 aa).

FAD is bound by residues cysteine 17, aspartate 36, glutamine 44, tyrosine 49, isoleucine 89, phenylalanine 124, aspartate 289, and threonine 330.

This sequence belongs to the ferredoxin--NADP reductase type 2 family. Homodimer. FAD serves as cofactor.

The catalysed reaction is 2 reduced [2Fe-2S]-[ferredoxin] + NADP(+) + H(+) = 2 oxidized [2Fe-2S]-[ferredoxin] + NADPH. The sequence is that of Ferredoxin--NADP reductase from Rhodopseudomonas palustris (strain BisA53).